Reading from the N-terminus, the 170-residue chain is Adenine phosphoribosyltransferase (170 aa).

Belongs to the purine/pyrimidine phosphoribosyltransferase family. As to quaternary structure, homodimer.

The protein resides in the cytoplasm. It catalyses the reaction AMP + diphosphate = 5-phospho-alpha-D-ribose 1-diphosphate + adenine. The protein operates within purine metabolism; AMP biosynthesis via salvage pathway; AMP from adenine: step 1/1. Its function is as follows. Catalyzes a salvage reaction resulting in the formation of AMP, that is energically less costly than de novo synthesis. This is Adenine phosphoribosyltransferase from Kosmotoga olearia (strain ATCC BAA-1733 / DSM 21960 / TBF 19.5.1).